Reading from the N-terminus, the 1542-residue chain is Pleiotropic ABC efflux transporter of multiple drugs PDH1 (1542 aa).

Positions 1–14 are enriched in low complexity; sequence MNTPDDSSVSSVDS. The disordered stretch occupies residues 1 to 61; the sequence is MNTPDDSSVS…APADGSAPLD (61 aa). Residues 1 to 517 are Cytoplasmic-facing; sequence MNTPDDSSVS…LIRNFWRIKN (517 aa). The segment covering 24–33 has biased composition (basic and acidic residues); sequence NVEKRIRELA. Over residues 35-47 the composition is skewed to polar residues; that stretch reads SLTQQSLTSSNRS. In terms of domain architecture, ABC transporter 1 spans 153-409; sequence VKLLNAVWRK…FQKMGYFCPK (257 aa). Transmembrane regions (helical) follow at residues 518-540, 552-574, 603-625, 634-652, 662-684, and 773-792; these read SASV…GSMF, FYFR…LLEI, VISE…YFLV, FFFY…SHLF, LQEA…GFAI, and GFGV…LILC. The Cytoplasmic portion of the chain corresponds to 793-1220; it reads EFNEGAKQKG…LFQQYWRTPD (428 aa). Positions 825-834 are enriched in basic and acidic residues; the sequence is TKMHTDKNDI. The interval 825–846 is disordered; that stretch reads TKMHTDKNDIENNSESITSNAT. The span at 835-846 shows a compositional bias: polar residues; that stretch reads ENNSESITSNAT. One can recognise an ABC transporter 2 domain in the interval 885–1128; sequence FHWQNLCYDV…MIKYFEDHGA (244 aa). 921 to 928 serves as a coordination point for ATP; sequence GASGAGKT. 6 helical membrane-spanning segments follow: residues 1221–1241, 1256–1276, 1296–1316, 1342–1362, 1370–1390, and 1495–1515; these read YLWS…FTFF, SIFM…PTFV, AFIL…GTLA, LFWL…LFVI, TAAH…GVMA, and GIFI…YWLA. Residues 1516 to 1542 are Cytoplasmic-facing; that stretch reads RVPKTNGKIAKNGKTAKVNFIRRLIPF.

This sequence belongs to the ABC transporter superfamily. ABCG family. PDR (TC 3.A.1.205) subfamily. Post-translationally, phosphorylated by PKA. Dephosphorylated on glucose depletion and independently rephosphorylated during glucose exposure or under stress.

Its subcellular location is the cell membrane. Functionally, pleiotropic ABC efflux transporter that confers resistance to structurally and functionally unrelated compounds including caspofungin or azoles such as fluconazole, itraconazole, posaconazole, voriconazole, and isavuconazole. Does not play a role in the azole resistance in mature biofilms. This chain is Pleiotropic ABC efflux transporter of multiple drugs PDH1, found in Candida glabrata (strain ATCC 2001 / BCRC 20586 / JCM 3761 / NBRC 0622 / NRRL Y-65 / CBS 138) (Yeast).